Here is a 204-residue protein sequence, read N- to C-terminus: uncharacterized protein (204 aa).

The first 17 residues, 1 to 17 (MKRLVTGLLALSLFLAA), serve as a signal peptide directing secretion. The segment at 17 to 102 (ACGQDSDQQK…NQSSNNQKSS (86 aa)) is disordered. Cys18 carries N-palmitoyl cysteine lipidation. A lipid anchor (S-diacylglycerol cysteine) is attached at Cys18. The span at 23-70 (DQQKDSNKEKDDKAKTEQQDKKTNDSSKDKKDNKDDSKDVNKDNKDNS) shows a compositional bias: basic and acidic residues. Residues 71–102 (ANDNQQQSNSNATNNDQNQTNNNQSSNNQKSS) are compositionally biased toward low complexity.

It is found in the cell membrane. This is an uncharacterized protein from Staphylococcus aureus (strain Mu50 / ATCC 700699).